The following is a 498-amino-acid chain: Glycerol kinase (498 aa).

Thr12 is an ADP binding site. ATP is bound by residues Thr12, Thr13, and Ser14. Position 12 (Thr12) interacts with sn-glycerol 3-phosphate. Position 16 (Arg16) interacts with ADP. 3 residues coordinate sn-glycerol 3-phosphate: Arg82, Glu83, and Tyr134. Glycerol contacts are provided by Arg82, Glu83, and Tyr134. The residue at position 230 (His230) is a Phosphohistidine; by HPr. Asp244 provides a ligand contact to sn-glycerol 3-phosphate. The glycerol site is built by Asp244 and Gln245. ADP-binding residues include Thr266 and Gly309. ATP is bound by residues Thr266, Gly309, Gln313, and Gly410. Gly410 and Asn414 together coordinate ADP.

This sequence belongs to the FGGY kinase family. As to quaternary structure, homotetramer and homodimer (in equilibrium). In terms of processing, the phosphoenolpyruvate-dependent sugar phosphotransferase system (PTS), including enzyme I, and histidine-containing protein (HPr) are required for the phosphorylation, which leads to the activation of the enzyme.

The enzyme catalyses glycerol + ATP = sn-glycerol 3-phosphate + ADP + H(+). It functions in the pathway polyol metabolism; glycerol degradation via glycerol kinase pathway; sn-glycerol 3-phosphate from glycerol: step 1/1. Its activity is regulated as follows. Activated by phosphorylation and inhibited by fructose 1,6-bisphosphate (FBP). Functionally, key enzyme in the regulation of glycerol uptake and metabolism. Catalyzes the phosphorylation of glycerol to yield sn-glycerol 3-phosphate. This Staphylococcus aureus (strain MW2) protein is Glycerol kinase.